A 613-amino-acid chain; its full sequence is YTH domain-containing family protein 2 (613 aa).

Disordered stretches follow at residues 1-43 (MSAS…AQPR), 215-234 (SQVS…AKTA), and 244-396 (AKPQ…TVPA). The localization to mRNA processing bodies (P-bodies) stretch occupies residues 2–397 (SASSLLEQRP…GMGGITVPAE (396 aa)). Residues 16 to 27 (NKVQNGAVTQKD) show a composition bias toward polar residues. Composition is skewed to low complexity over residues 218 to 234 (STAP…AKTA), 295 to 307 (NGQP…PQPG), and 345 to 360 (PPQL…PSQP). The interaction with m6A-containing mRNAs stretch occupies residues 398–613 (PHPVLEKLRM…RMQDRQGRVK (216 aa)). Positions 423-557 (GRVFIIKSYS…DKARQVLKII (135 aa)) constitute a YTH domain. Residues 429–431 (KSY), D435, 445–446 (WC), N475, W499, and W504 each bind RNA. Composition is skewed to basic and acidic residues over residues 578–587 (EEEESVKKVE) and 604–613 (RMQDRQGRVK). Residues 578 to 613 (EEEESVKKVEVQGSDPYSNNSSRSHYRMQDRQGRVK) are disordered.

The protein belongs to the YTHDF family. YTHDF2 subfamily.

It is found in the cytoplasm. The protein localises to the cytosol. Its subcellular location is the P-body. The protein resides in the stress granule. It localises to the nucleus. Functionally, specifically recognizes and binds N6-methyladenosine (m6A)-containing RNAs, and regulates their stability. M6A is a modification present at internal sites of mRNAs and some non-coding RNAs and plays a role in mRNA stability and processing. Acts as a regulator of mRNA stability by promoting degradation of m6A-containing mRNAs. The YTHDF paralogs (ythdf1, ythdf2 and ythdf3) share m6A-containing mRNAs targets and act redundantly to mediate mRNA degradation and cellular differentiation. Plays a key role in maternal-to-zygotic transition during early embryonic development, the process during which maternally inherited mRNAs are degraded: acts by binding m6A-containing maternal mRNAs and promoting their degradation. More than one-third of maternal mRNAs can be modified by m6A. Binding to m6A-containing mRNAs results in mRNA degradation. Also involved in hematopoietic stem cells specification by binding to m6A-containing mRNAs, such as notch1a, and promote their degradation. The decreased Notch signaling following notch1a degradation promotes endothelial to hematopoietic transition. Promotes formation of phase-separated membraneless compartments, such as P-bodies or stress granules, by undergoing liquid-liquid phase separation upon binding to mRNAs containing multiple m6A-modified residues: polymethylated mRNAs act as a multivalent scaffold for the binding of YTHDF proteins, juxtaposing their disordered regions and thereby leading to phase separation. The resulting mRNA-YTHDF complexes then partition into different endogenous phase-separated membraneless compartments, such as P-bodies, stress granules or neuronal RNA granules. The chain is YTH domain-containing family protein 2 from Danio rerio (Zebrafish).